A 301-amino-acid chain; its full sequence is Phospholipase A1 (301 aa).

Cysteines 4 and 87 form a disulfide. Ser-137 serves as the catalytic Nucleophile. The active-site Charge relay system is Asp-165. 2 disulfide bridges follow: Cys-176–Cys-181 and Cys-219–Cys-228. His-230 serves as the catalytic Charge relay system. 3 cysteine pairs are disulfide-bonded: Cys-245–Cys-269, Cys-246–Cys-294, and Cys-262–Cys-267.

It belongs to the AB hydrolase superfamily. Lipase family. As to expression, expressed by the venom gland.

The protein resides in the secreted. It catalyses the reaction a 1,2-diacyl-sn-glycero-3-phosphocholine + H2O = a 2-acyl-sn-glycero-3-phosphocholine + a fatty acid + H(+). In terms of biological role, catalyzes the hydrolysis of phosphatidylcholine with phospholipase A1 activity. May act as an allergen and induce hemolytic activity. This chain is Phospholipase A1, found in Vespa crabro (European hornet).